The primary structure comprises 267 residues: Large ribosomal subunit protein bL9m (267 aa).

The N-terminal 52 residues, 1–52, are a transit peptide targeting the mitochondrion; it reads MAAPVVTAPGRALLRAGAGRLLRGGVQELLRPRHEGNAPDLACNFSLSQNRG.

The protein belongs to the bacterial ribosomal protein bL9 family. In terms of assembly, component of the mitochondrial large ribosomal subunit (mt-LSU). Mature mammalian 55S mitochondrial ribosomes consist of a small (28S) and a large (39S) subunit. The 28S small subunit contains a 12S ribosomal RNA (12S mt-rRNA) and 30 different proteins. The 39S large subunit contains a 16S rRNA (16S mt-rRNA), a copy of mitochondrial valine transfer RNA (mt-tRNA(Val)), which plays an integral structural role, and 52 different proteins.

It localises to the mitochondrion. This is Large ribosomal subunit protein bL9m (MRPL9) from Homo sapiens (Human).